Consider the following 149-residue polypeptide: Nucleoside diphosphate kinase (149 aa).

ATP is bound by residues Lys9, Phe57, Arg85, Thr91, Arg102, and Asn112. The active-site Pros-phosphohistidine intermediate is His115.

This sequence belongs to the NDK family. Mg(2+) serves as cofactor.

Its subcellular location is the cytoplasm. The catalysed reaction is a 2'-deoxyribonucleoside 5'-diphosphate + ATP = a 2'-deoxyribonucleoside 5'-triphosphate + ADP. It carries out the reaction a ribonucleoside 5'-diphosphate + ATP = a ribonucleoside 5'-triphosphate + ADP. Functionally, major role in the synthesis of nucleoside triphosphates other than ATP. The ATP gamma phosphate is transferred to the NDP beta phosphate via a ping-pong mechanism, using a phosphorylated active-site intermediate. The polypeptide is Nucleoside diphosphate kinase (Methanosarcina acetivorans (strain ATCC 35395 / DSM 2834 / JCM 12185 / C2A)).